Here is a 278-residue protein sequence, read N- to C-terminus: Elongation factor Ts (278 aa).

Residues 80-83 (TDFV) are involved in Mg(2+) ion dislocation from EF-Tu.

It belongs to the EF-Ts family.

The protein localises to the cytoplasm. In terms of biological role, associates with the EF-Tu.GDP complex and induces the exchange of GDP to GTP. It remains bound to the aminoacyl-tRNA.EF-Tu.GTP complex up to the GTP hydrolysis stage on the ribosome. The sequence is that of Elongation factor Ts from Arthrobacter sp. (strain FB24).